The primary structure comprises 561 residues: uncharacterized protein (561 aa).

Polar residues predominate over residues 1–11; it reads MSQVSLPSQLK. 2 disordered regions span residues 1–22 and 522–561; these read MSQV…SRCR and CSLP…IMLP. The segment covering 541-561 has biased composition (low complexity); it reads QQPQQAQAEQAQQPQQQIMLP.

The protein to Synechocystis PCC 6803 sll0335 and to M.tuberculosis Rv2567.

This is an uncharacterized protein from Mycobacterium leprae (strain TN).